The following is a 63-amino-acid chain: Sarcotoxin-1B (63 aa).

The N-terminal stretch at 1 to 23 (MNFNKVFIFVALILAVFAGQSQA) is a signal peptide. Arg62 carries the arginine amide modification.

This sequence belongs to the cecropin family.

Its subcellular location is the secreted. In terms of biological role, sarcotoxins, which are potent bactericidal proteins, are produced in response to injury. They are cytotoxic to both Gram-positive and Gram-negative bacteria. The chain is Sarcotoxin-1B from Sarcophaga peregrina (Flesh fly).